The following is a 197-amino-acid chain: Holliday junction branch migration complex subunit RuvA (197 aa).

The tract at residues 1-64 (MYEYIKGKYI…EDFIGVYGFL (64 aa)) is domain I. A domain II region spans residues 65–143 (TKDELSMFKL…IDILEEDDEQ (79 aa)). Residues 144 to 148 (TINKV) form a flexible linker region. The domain III stretch occupies residues 149–197 (TDDKKVLEAVAALITLGYSEKEANKVINSCDKNNSLEQIIKEALKYLMK).

This sequence belongs to the RuvA family. As to quaternary structure, homotetramer. Forms an RuvA(8)-RuvB(12)-Holliday junction (HJ) complex. HJ DNA is sandwiched between 2 RuvA tetramers; dsDNA enters through RuvA and exits via RuvB. An RuvB hexamer assembles on each DNA strand where it exits the tetramer. Each RuvB hexamer is contacted by two RuvA subunits (via domain III) on 2 adjacent RuvB subunits; this complex drives branch migration. In the full resolvosome a probable DNA-RuvA(4)-RuvB(12)-RuvC(2) complex forms which resolves the HJ.

The protein resides in the cytoplasm. In terms of biological role, the RuvA-RuvB-RuvC complex processes Holliday junction (HJ) DNA during genetic recombination and DNA repair, while the RuvA-RuvB complex plays an important role in the rescue of blocked DNA replication forks via replication fork reversal (RFR). RuvA specifically binds to HJ cruciform DNA, conferring on it an open structure. The RuvB hexamer acts as an ATP-dependent pump, pulling dsDNA into and through the RuvAB complex. HJ branch migration allows RuvC to scan DNA until it finds its consensus sequence, where it cleaves and resolves the cruciform DNA. The polypeptide is Holliday junction branch migration complex subunit RuvA (Clostridium botulinum (strain 657 / Type Ba4)).